The sequence spans 416 residues: Queuine tRNA-ribosyltransferase accessory subunit 2 (416 aa).

Zn(2+) is bound by residues Cys350, Cys352, Cys355, and His381.

It belongs to the queuine tRNA-ribosyltransferase family. QTRT2 subfamily. In terms of assembly, heterodimer of a catalytic subunit qtrt1 and an accessory subunit qtrt2. Zn(2+) serves as cofactor.

The protein resides in the cytoplasm. Its subcellular location is the mitochondrion outer membrane. Non-catalytic subunit of the queuine tRNA-ribosyltransferase (TGT) that catalyzes the base-exchange of a guanine (G) residue with queuine (Q) at position 34 (anticodon wobble position) in tRNAs with GU(N) anticodons (tRNA-Asp, -Asn, -His and -Tyr), resulting in the hypermodified nucleoside queuosine (7-(((4,5-cis-dihydroxy-2-cyclopenten-1-yl)amino)methyl)-7-deazaguanosine). This chain is Queuine tRNA-ribosyltransferase accessory subunit 2, found in Danio rerio (Zebrafish).